The sequence spans 138 residues: uncharacterized protein (138 aa).

2 disordered regions span residues 1-23 (MPES…MLSE) and 35-83 (ASPS…EDPV). The span at 60–69 (DEETIPEEDD) shows a compositional bias: acidic residues.

This is an uncharacterized protein from Schizosaccharomyces pombe (strain 972 / ATCC 24843) (Fission yeast).